The following is a 301-amino-acid chain: 4-hydroxy-tetrahydrodipicolinate synthase (301 aa).

Thr-46 is a pyruvate binding site. The Proton donor/acceptor role is filled by Tyr-135. The active-site Schiff-base intermediate with substrate is Lys-163. Position 205 (Ile-205) interacts with pyruvate.

The protein belongs to the DapA family. As to quaternary structure, homotetramer; dimer of dimers.

The protein localises to the cytoplasm. The catalysed reaction is L-aspartate 4-semialdehyde + pyruvate = (2S,4S)-4-hydroxy-2,3,4,5-tetrahydrodipicolinate + H2O + H(+). Its pathway is amino-acid biosynthesis; L-lysine biosynthesis via DAP pathway; (S)-tetrahydrodipicolinate from L-aspartate: step 3/4. Catalyzes the condensation of (S)-aspartate-beta-semialdehyde [(S)-ASA] and pyruvate to 4-hydroxy-tetrahydrodipicolinate (HTPA). In Lacticaseibacillus casei (strain BL23) (Lactobacillus casei), this protein is 4-hydroxy-tetrahydrodipicolinate synthase.